Consider the following 544-residue polypeptide: Esterase P (544 aa).

Positions 1 to 19 (MSIFKRLLCLTLLWIAALE) are cleaved as a signal peptide. N75 carries N-linked (GlcNAc...) asparagine glycosylation. Cysteines 83 and 102 form a disulfide. N-linked (GlcNAc...) asparagine glycosylation occurs at N114. S206 (acyl-ester intermediate) is an active-site residue. C258 and C270 are joined by a disulfide. N-linked (GlcNAc...) asparagine glycosylation is found at N262 and N456. H466 serves as the catalytic Charge relay system. An intrachain disulfide couples C514 to C535.

The protein belongs to the type-B carboxylesterase/lipase family. As to quaternary structure, monomer.

The protein localises to the secreted. The enzyme catalyses a carboxylic ester + H2O = an alcohol + a carboxylate + H(+). This is Esterase P (Est-P) from Drosophila melanogaster (Fruit fly).